A 238-amino-acid chain; its full sequence is MAASALSTCLWMLVLGTCVSLVVGTDCGKECALCVYRLLGQQSTLSSLTCSLECDGGLDSQKLRLCQDVLLEEENQSPLASQQDQERVDAMMADEEDATSPEHQMAKKYGGFMKRYGGFMSRRSSASSLEEAGNQDEEQSIRTEILKILNAATEHGGEGDGQEAEAVKRYGGFMRRADRGAAQGNLVEAVLGRVLKKRYGGFMRRVGRPEWLVDSSKKVGVLKENGSELQKRHGGFMD.

The first 25 residues, 1–25, serve as a signal peptide directing secretion; the sequence is MAASALSTCLWMLVLGTCVSLVVGT. 3 cysteine pairs are disulfide-bonded: C27/C50, C31/C54, and C34/C66. Positions 76–103 are disordered; the sequence is QSPLASQQDQERVDAMMADEEDATSPEH. 3 consecutive propeptides follow at residues 124–167, 177–195, and 206–230; these read SSAS…AEAV, ADRGAAQGNLVEAVLGRVL, and VGRPEWLVDSSKKVGVLKENGSELQ.

This sequence belongs to the opioid neuropeptide precursor family. In terms of tissue distribution, expressed by the venom gland. Moderately expressed in the venom gland transcriptome.

The protein resides in the secreted. Its function is as follows. Met-enkephalins compete with and mimic the effects of opiate drugs. They play a role in a number of physiologic functions, including pain perception and responses to stress. Enkephalin peptides found in Meiacanthus fangblennies induce physiological effects via their interaction with delta-type opioid receptors (OPRD1) (tested on M.grammistes). Therefore, finding a proenkephalin sequence in M.atrodorsalis venom suggests that this protein act in the same manner. The protein is Proenkephalin-A of Meiacanthus atrodorsalis (Forktail blenny).